Consider the following 269-residue polypeptide: Type II restriction enzyme SfiI (269 aa).

The enzyme catalyses Endonucleolytic cleavage of DNA to give specific double-stranded fragments with terminal 5'-phosphates.. An F and P subtype restriction enzyme that recognizes the double-stranded sequence 5'-GGCCN(5)GGCC-3' and cleaves before N-9. The protein is Type II restriction enzyme SfiI (sfiIR) of Streptomyces fimbriatus.